Here is a 115-residue protein sequence, read N- to C-terminus: uncharacterized protein (115 aa).

The next 3 helical transmembrane spans lie at I6–V26, A43–L63, and I84–Q104.

Belongs to the AzlD/HI_1737/HP1330 family.

It localises to the cell membrane. This is an uncharacterized protein from Helicobacter pylori (strain ATCC 700392 / 26695) (Campylobacter pylori).